Consider the following 261-residue polypeptide: tRNA U34 carboxymethyltransferase (261 aa).

Carboxy-S-adenosyl-L-methionine contacts are provided by residues Lys25, Trp39, Lys44, Gly63, 114–115, Tyr135, and Arg250; that span reads VE.

This sequence belongs to the class I-like SAM-binding methyltransferase superfamily. CmoB family. In terms of assembly, homotetramer.

It catalyses the reaction carboxy-S-adenosyl-L-methionine + 5-hydroxyuridine(34) in tRNA = 5-carboxymethoxyuridine(34) in tRNA + S-adenosyl-L-homocysteine + H(+). Catalyzes carboxymethyl transfer from carboxy-S-adenosyl-L-methionine (Cx-SAM) to 5-hydroxyuridine (ho5U) to form 5-carboxymethoxyuridine (cmo5U) at position 34 in tRNAs. This chain is tRNA U34 carboxymethyltransferase, found in Helicobacter pylori (strain ATCC 700392 / 26695) (Campylobacter pylori).